A 191-amino-acid polypeptide reads, in one-letter code: Corticoliberin (191 aa).

The first 24 residues, 1 to 24 (MRLPLLVSAGVLLVALLPCPPCRA), serve as a signal peptide directing secretion. The propeptide occupies 25–148 (LLSRGPVLGA…RQEAPERERR (124 aa)). The interval 115-153 (PLPRRPLDSPSGPAERGAENALSSRQEAPERERRSEEPP) is disordered. A compositionally biased stretch (basic and acidic residues) spans 141–151 (EAPERERRSEE). I189 is subject to Isoleucine amide.

This sequence belongs to the sauvagine/corticotropin-releasing factor/urotensin I family. As to quaternary structure, interacts (via C-terminus) with CRFR1 (via N-terminal extracellular domain). In terms of tissue distribution, produced by the hypothalamus.

It localises to the secreted. In terms of biological role, hormone regulating the release of corticotropin from pituitary gland. Induces NLRP6 in intestinal epithelial cells, hence may influence gut microbiota profile. The protein is Corticoliberin (CRH) of Sus scrofa (Pig).